Reading from the N-terminus, the 601-residue chain is Vesicular glutamate transporter 3 (601 aa).

Topologically, residues 1-89 (MPFKAFDTFK…CSCCGIPKRY (89 aa)) are cytoplasmic. Residues 90–110 (IIAVMSGLGFCISFGIRCNLG) traverse the membrane as a helical segment. Over 111–143 (VAIVEMVNNSTVYVDGKPEIQTAQFNWDPETVG) the chain is Vesicular. Asparagine 119 carries an N-linked (GlcNAc...) asparagine glycan. A helical membrane pass occupies residues 144–164 (LIHGSFFWGYIVTQIPGGFIS). The Cytoplasmic segment spans residues 165–166 (NK). The helical transmembrane segment at 167–187 (FAASRVFGAAIFLTSTLNMFI) threads the bilayer. Topologically, residues 188 to 195 (PSAARVHY) are vesicular. Residues 196 to 216 (GCVMGVRILQGLVEGVTYPAC) form a helical membrane-spanning segment. Topologically, residues 217–234 (HGMWSKWAPPLERSRLAT) are cytoplasmic. The chain crosses the membrane as a helical span at residues 235–255 (TSFCGSYAGAVVAMPLAGVLV). The Vesicular segment spans residues 256-262 (QYIGWAS). The chain crosses the membrane as a helical span at residues 263 to 283 (VFYIYGMFGIIWYMFWLLQAY). Over 284–327 (ECPAAHPTISNAERTYIETSIGEGANLASLSKFNTPWRRFFTSL) the chain is Cytoplasmic. The chain crosses the membrane as a helical span at residues 328 to 348 (PVYAIIVANFCRSWTFYLLLI). The Vesicular portion of the chain corresponds to 349-366 (SQPAYFEEVFGFAISKVG). A helical membrane pass occupies residues 367-387 (LLSAVPHMVMTIVVPIGGQLA). The Cytoplasmic portion of the chain corresponds to 388 to 403 (DYLRSRKILTTTAVRK). Residues 404-424 (IMNCGGFGMEATLLLVVGFSH) form a helical membrane-spanning segment. Residues 425-426 (TK) are Vesicular-facing. The helical transmembrane segment at 427 to 447 (GVAISFLVLAVGFSGFAISGF) threads the bilayer. The Cytoplasmic segment spans residues 448–460 (NVNHLDIAPRYAS). A helical membrane pass occupies residues 461-481 (ILMGISNGVGTLSGMVCPLIV). The Vesicular portion of the chain corresponds to 482–494 (GAMTKHKTREEWQ). Residues 495–515 (NVFLIAALVHYSGVIFYGVFA) traverse the membrane as a helical segment. The Cytoplasmic portion of the chain corresponds to 516–598 (SGEKQDWADP…LSYQAEGDFS (83 aa)). Residues 576–601 (RQQRESAFDGEEPLSYQAEGDFSETS) are disordered.

It belongs to the major facilitator superfamily. Sodium/anion cotransporter family. VGLUT subfamily. In terms of tissue distribution, expressed in restricted areas of the brain. Highest expression is found in the neurons of the basal forebrain, the hippocampal formation, and the majority of the neurons of the mesencephalic raphe nuclei. Expressed in inner hair cells of the ear.

The protein localises to the cytoplasmic vesicle. It is found in the secretory vesicle. It localises to the synaptic vesicle membrane. Its subcellular location is the cell membrane. The protein resides in the synapse. The protein localises to the synaptosome. It carries out the reaction L-glutamate(out) = L-glutamate(in). It catalyses the reaction 3 Na(+)(out) + phosphate(out) = 3 Na(+)(in) + phosphate(in). The enzyme catalyses chloride(in) = chloride(out). The L-glutamate uniporter activity exhibits a biphasic dependence on chloride concentration. Chloride channel activity is allosterically activated by lumenal H(+) and Cl(-) leading to synaptic vesicles acidification. The L-glutamate transport activity is allosterically activated by lumenal H(+) and Cl(-), preventing non-vesicular L-glutamate release. Multifunctional transporter that transports L-glutamate as well as multiple ions such as chloride, sodium and phosphate. At the synaptic vesicle membrane, mainly functions as an uniporter that mediates the uptake of L-glutamate into synaptic vesicles at presynaptic nerve terminals of excitatory neural cells. The L-glutamate uniporter activity is electrogenic and is driven by the proton electrochemical gradient, mainly by the electrical gradient established by the vacuolar H(+)-ATPase across the synaptic vesicle membrane. In addition, functions as a chloride channel that allows a chloride permeation through the synaptic vesicle membrane that affects the proton electrochemical gradient and promotes synaptic vesicles acidification. At the plasma membrane, following exocytosis, functions as a symporter of Na(+) and phosphate from the extracellular space to the cytoplasm allowing synaptic phosphate homeostasis regulation. The symporter activity is electrogenic. Moreover, operates synergistically with SLC18A3/VACHT under a constant H(+) gradient, thereby allowing striatal vesicular acetylcholine uptake. This is Vesicular glutamate transporter 3 from Mus musculus (Mouse).